We begin with the raw amino-acid sequence, 252 residues long: Small ribosomal subunit protein uS3 (252 aa).

The KH type-2 domain maps to 16–85 (IDEYLETKLE…NPQVEVKEVD (70 aa)). Positions 233–252 (EESEIEEITEEIEDVETLEE) are disordered.

This sequence belongs to the universal ribosomal protein uS3 family. Part of the 30S ribosomal subunit.

Functionally, binds the lower part of the 30S subunit head. This chain is Small ribosomal subunit protein uS3, found in Methanosphaera stadtmanae (strain ATCC 43021 / DSM 3091 / JCM 11832 / MCB-3).